The sequence spans 649 residues: Microtubule-associated protein VP6 (649 aa).

The protein localises to the virion. It localises to the host cytoplasm. The protein resides in the host cytoskeleton. Minor inner capsid component. Displays NTPase and RNA 5'-triphosphatase (RTPase) activities. May function as a cofactor of polymerase VP2. Associates with microtubules and plays a role in the formation, structural organization and morphology of viral inclusions, where the assembly of cores and the replication of viral RNA occur. The polypeptide is Microtubule-associated protein VP6 (S6) (Cryphonectria parasitica (Chestnut blight fungus)).